A 470-amino-acid chain; its full sequence is Sorting nexin-17 (470 aa).

The region spanning 1-109 (MHFSIPETES…SFLRRAQQET (109 aa)) is the PX domain. Positions 36, 38, 62, and 75 each coordinate a 1,2-diacyl-sn-glycero-3-phospho-(1D-myo-inositol-3-phosphate). In terms of domain architecture, Ras-associating spans 115–206 (EEVSLEVLLS…YKIVLRKSYW (92 aa)). The tract at residues 115–432 (EEVSLEVLLS…DATRESMVKL (318 aa)) is FERM-like. Positions 270-432 (GYLRFDACVA…DATRESMVKL (163 aa)) are PTB-like F3 module. Ser-336, Ser-407, Ser-409, Ser-415, Ser-421, Ser-437, and Ser-440 each carry phosphoserine. A disordered region spans residues 400–425 (VGGTLRRSDSQQAVKSPPLLESPDAT).

This sequence belongs to the sorting nexin family. In terms of assembly, monomer. Interacts with APP (via cytoplasmic YXNPXY motif). Interacts with KIF1B. Interacts with the C-termini of P-selectin, PTC, LDLR, VLDLR, LRP1 and LRP8. Interacts with KRIT1 (via N-terminus). Interacts with HRAS. Interacts with ITGB1 and ITGB5 (via NPxY motif). Interacts with CCDC22 and CCDC93; the interaction associates SNX17 with the CCC complex. Interacts (via C-terminus) with VPS26C and VPS35L; the interactions are direct and associate SNX17 with the retriever complex.

It is found in the cytoplasm. The protein resides in the early endosome. It localises to the cytoplasmic vesicle membrane. Functionally, critical regulator of endosomal recycling of numerous surface proteins, including integrins, signaling receptor and channels. Binds to NPxY sequences in the cytoplasmic tails of target cargos. Associates with retriever and CCC complexes to prevent lysosomal degradation and promote cell surface recycling of numerous cargos such as integrins ITGB1, ITGB5 and their associated alpha subunits. Also required for maintenance of normal cell surface levels of APP and LRP1. Interacts with membranes containing phosphatidylinositol 3-phosphate (PtdIns(3P)). This chain is Sorting nexin-17 (SNX17), found in Pongo abelii (Sumatran orangutan).